A 90-amino-acid chain; its full sequence is C-C motif chemokine 4 homolog (90 aa).

An N-terminal signal peptide occupies residues 1-21; that stretch reads MKVSVAALAVLLIAICYQTSA. Intrachain disulfides connect Cys32–Cys56 and Cys33–Cys72.

Belongs to the intercrine beta (chemokine CC) family. In terms of assembly, homodimer.

The protein localises to the secreted. Functionally, monokine with inflammatory and chemokinetic properties. The polypeptide is C-C motif chemokine 4 homolog (CCL4) (Gallus gallus (Chicken)).